A 101-amino-acid chain; its full sequence is Apolipoprotein C-II (101 aa).

The N-terminal stretch at 1-22 (MGIRYLLVLVLVLLVLGCEVQG) is a signal peptide. Positions 23–28 (AHMPQQ) are excised as a propeptide. Residues 66-74 (TMDEKIREI) are lipid binding. The tract at residues 78 to 101 (STAAVSTYAGIFTDQLLSMLKGDQ) is lipoprotein lipase cofactor.

It belongs to the apolipoprotein C2 family. Post-translationally, proapolipoprotein C-II is synthesized as a sialic acid containing glycoprotein which is subsequently desialylated prior to its proteolytic processing. In terms of processing, proapolipoprotein C-II, the major form found in plasma undergoes proteolytic cleavage of its N-terminal hexapeptide to generate apolipoprotein C-II, which occurs as the minor form in plasma.

The protein resides in the secreted. In terms of biological role, component of chylomicrons, very low-density lipoproteins (VLDL), low-density lipoproteins (LDL), and high-density lipoproteins (HDL) in plasma. Plays an important role in lipoprotein metabolism as an activator of lipoprotein lipase. Both proapolipoprotein C-II and apolipoprotein C-II can activate lipoprotein lipase. This Neomonachus schauinslandi (Hawaiian monk seal) protein is Apolipoprotein C-II (APOC2).